The sequence spans 349 residues: Peroxidase 22 (349 aa).

Positions 1–29 are cleaved as a signal peptide; the sequence is MGFSPSFSCSAIGALILGCLLLQASNSNA. Q30 carries the post-translational modification Pyrrolidone carboxylic acid. 4 disulfides stabilise this stretch: C40–C120, C73–C78, C126–C329, and C206–C238. The active-site Proton acceptor is the H71. Ca(2+) is bound by residues D72, V75, G77, D79, and S81. N-linked (GlcNAc...) asparagine glycosylation occurs at N86. P168 is a binding site for substrate. 2 N-linked (GlcNAc...) asparagine glycosylation sites follow: N173 and N187. Position 199 (H199) interacts with heme b. Residue T200 participates in Ca(2+) binding. 2 N-linked (GlcNAc...) asparagine glycosylation sites follow: N217 and N243. Ca(2+) is bound by residues D251, T254, and D259.

The protein belongs to the peroxidase family. Classical plant (class III) peroxidase subfamily. The cofactor is heme b. Ca(2+) is required as a cofactor. Mainly expressed in roots.

It is found in the secreted. Its subcellular location is the vacuole. It carries out the reaction 2 a phenolic donor + H2O2 = 2 a phenolic radical donor + 2 H2O. Functionally, removal of H(2)O(2), oxidation of toxic reductants, biosynthesis and degradation of lignin, suberization, auxin catabolism, response to environmental stresses such as wounding, pathogen attack and oxidative stress. These functions might be dependent on each isozyme/isoform in each plant tissue. This is Peroxidase 22 (PER22) from Arabidopsis thaliana (Mouse-ear cress).